A 340-amino-acid chain; its full sequence is Dihydroorotate dehydrogenase (quinone) (340 aa).

FMN is bound by residues 63–67 (AGLDK) and Thr-87. Substrate is bound at residue Lys-67. 112–116 (NRMGF) is a substrate binding site. Positions 140 and 173 each coordinate FMN. Asn-173 serves as a coordination point for substrate. Ser-176 (nucleophile) is an active-site residue. Substrate is bound at residue Asn-178. Residues Lys-218 and Thr-246 each coordinate FMN. Substrate is bound at residue 247–248 (NT). FMN contacts are provided by residues Gly-269, Gly-298, and 319–320 (YT).

The protein belongs to the dihydroorotate dehydrogenase family. Type 2 subfamily. In terms of assembly, monomer. The cofactor is FMN.

The protein resides in the cell membrane. It catalyses the reaction (S)-dihydroorotate + a quinone = orotate + a quinol. It participates in pyrimidine metabolism; UMP biosynthesis via de novo pathway; orotate from (S)-dihydroorotate (quinone route): step 1/1. In terms of biological role, catalyzes the conversion of dihydroorotate to orotate with quinone as electron acceptor. The polypeptide is Dihydroorotate dehydrogenase (quinone) (Methylococcus capsulatus (strain ATCC 33009 / NCIMB 11132 / Bath)).